Reading from the N-terminus, the 175-residue chain is Cytochrome c homolog (175 aa).

Residues 1-8 (MSGKELNK) are Cytoplasmic-facing. The helical; Signal-anchor transmembrane segment at 9-29 (IVAAILFASLIAMMVGFVANI) threads the bilayer. Residues 30-175 (LYKPTLELQH…LFLKTYVHDK (146 aa)) lie on the Periplasmic side of the membrane. The heme c site is built by Cys84, Cys87, His88, and Met150.

Belongs to the cytochrome c family. In terms of processing, binds 1 heme c group covalently per subunit.

It localises to the cell membrane. In terms of biological role, may be involved in electron transfer from bc1 complex to aa3. The chain is Cytochrome c homolog (cycM) from Rickettsia conorii (strain ATCC VR-613 / Malish 7).